Reading from the N-terminus, the 292-residue chain is MTEFDLSTREGRWKHFGSVDPVKGTKPTTKNEMTDLQSTHKNFLFEIEEVGIKNLTYPVLIDQYQTAGLFSFSTSLNKNEKGINMSRILESVEKHYDNGIELEFNTLHQLLRTLQDKMNQNAAGVDVSGKWFFDRYSPVTNIKAVGHADVTYGLAIENHTVTRKELTIQAKVTTLCPCSKEISEYSAHNQRGIVTVKAYLDKNNDVIDDYKDKILDAMEANASSILYPILKRPDEKRVTERAYENPRFVEDLIRLIAADLVEFDWIEGFDIECRNEESIHQHDAFARLKYRK.

It belongs to the GTP cyclohydrolase IV family.

The enzyme catalyses GTP + H2O = 7,8-dihydroneopterin 3'-triphosphate + formate + H(+). It functions in the pathway cofactor biosynthesis; 7,8-dihydroneopterin triphosphate biosynthesis; 7,8-dihydroneopterin triphosphate from GTP: step 1/1. Converts GTP to 7,8-dihydroneopterin triphosphate. This is GTP cyclohydrolase FolE2 from Staphylococcus epidermidis (strain ATCC 12228 / FDA PCI 1200).